Here is a 1690-residue protein sequence, read N- to C-terminus: DNA-directed RNA polymerase subunit beta' (1690 aa).

Residues Cys-63, Cys-65, Cys-78, and Cys-81 each contribute to the Zn(2+) site. Residues Asp-753, Asp-755, and Asp-757 each contribute to the Mg(2+) site. Zn(2+) contacts are provided by Cys-1107, Cys-1295, Cys-1302, and Cys-1305.

This sequence belongs to the RNA polymerase beta' chain family. In terms of assembly, the RNAP catalytic core consists of 2 alpha, 1 beta, 1 beta' and 1 omega subunit. When a sigma factor is associated with the core the holoenzyme is formed, which can initiate transcription. Requires Mg(2+) as cofactor. It depends on Zn(2+) as a cofactor.

It carries out the reaction RNA(n) + a ribonucleoside 5'-triphosphate = RNA(n+1) + diphosphate. DNA-dependent RNA polymerase catalyzes the transcription of DNA into RNA using the four ribonucleoside triphosphates as substrates. The chain is DNA-directed RNA polymerase subunit beta' from Thermotoga sp. (strain RQ2).